The primary structure comprises 432 residues: Ribulose bisphosphate carboxylase-like protein 2 (432 aa).

Positions 198, 200, and 201 each coordinate Mg(2+). The residue at position 198 (Lys198) is an N6-carboxylysine.

It belongs to the RuBisCO large chain family. Type IV subfamily. Homodimer. Mg(2+) serves as cofactor.

May be involved in sulfur metabolism and oxidative stress response. Does not show RuBisCO activity. The chain is Ribulose bisphosphate carboxylase-like protein 2 (rlp2) from Rhodopseudomonas palustris (strain ATCC BAA-98 / CGA009).